A 269-amino-acid polypeptide reads, in one-letter code: 4-hydroxy-4-methyl-2-oxoglutarate aldolase cghB (269 aa).

The Proton acceptor role is filled by H48. E155 and D181 together coordinate a divalent metal cation. A substrate-binding site is contributed by D181.

Belongs to the HpcH/HpaI aldolase family. Homohexamer; trimer of dimers. It depends on Co(2+) as a cofactor. Mn(2+) is required as a cofactor. Requires Zn(2+) as cofactor. Fe(2+) serves as cofactor. The cofactor is Mg(2+).

The catalysed reaction is 4-hydroxy-4-methyl-2-oxoglutarate = 2 pyruvate. The protein operates within secondary metabolite biosynthesis. Functionally, 4-hydroxy-4-methyl-2-oxoglutarate aldolase; part of the gene cluster that mediates the biosynthesis of the tetramic acid Sch210972, a potential anti-HIV fungal natural product that contains a decalin core. The PKS module of cghG together with the enoylreductase cghC catalyze the formation of the polyketide unit which is then conjugated to 4-hydroxyl-4-methyl glutamate (HMG) by the condensation domain of the cghG NRPS module. One unique structural feature of Sch210972 is the tetramic acid motif proposed to be derived from the non-proteinogenic amino acid HMG, by a Dieckmann-type condensation catalyzed by the reductase domain of cghG. The aldolase cghB catalyzes the aldol condensation of 2 molecules of pyruvic acid to yield the intermediate 4-hydroxyl-4-methyl-2-oxoglutarate (HMOG), which can then be stereoselectively transaminated by an unidentified enzyme to form HMG. The Diels-Alderase cghA then uses the Dieckmann product released by cghG as substrate and catalyzes the Diels-Alder cycloaddition to form the decalin ring of Sch210972. CghA also suppresses the nonenzymatic formation of the alternative stereoisomer. In Chaetomium globosum (strain ATCC 6205 / CBS 148.51 / DSM 1962 / NBRC 6347 / NRRL 1970) (Soil fungus), this protein is 4-hydroxy-4-methyl-2-oxoglutarate aldolase cghB.